A 109-amino-acid chain; its full sequence is Spermidine export protein MdtI (109 aa).

4 helical membrane passes run 6–26 (WWHA…NILL), 36–56 (WMGI…AQAV), 63–83 (IAYA…GWIM), and 88–108 (LNYK…MIKM).

It belongs to the drug/metabolite transporter (DMT) superfamily. Small multidrug resistance (SMR) (TC 2.A.7.1) family. MdtI subfamily. In terms of assembly, forms a complex with MdtJ.

The protein localises to the cell inner membrane. Functionally, catalyzes the excretion of spermidine. In Photorhabdus laumondii subsp. laumondii (strain DSM 15139 / CIP 105565 / TT01) (Photorhabdus luminescens subsp. laumondii), this protein is Spermidine export protein MdtI.